The sequence spans 792 residues: Oxidoreductase cns1 (792 aa).

As to quaternary structure, interacts with cns2.

The protein localises to the lipid droplet. Its pathway is secondary metabolite biosynthesis. Its function is as follows. Oxidoreductase; part of the gene cluster that mediates the biosynthesis of cordycepin (COR) and pentostatin (PTN), two adenosine analogs with related bioactivity profiles as both mimic adenosine and can inhibit some of the processes that are adenosine dependent. Within the pathway, cns1 catalyzes the last step by converting the cns2 product 2'-carbonyl-3'-deoxyadenosine (2'-C-3'-dA) into cordycepin (3'-deoxyadenosine). The first step of cordycepin biosynthesis involves hydroxyl phosphorylation of the 3'-OH position on adenosine to produce adenosine-3'-monophosphate (3'-AMP), catalyzed by kinase activity of cns3. Next, 3'-AMP is dephosphorylated to 2'-carbonyl-3'-deoxyadenosine by cns2, which is finally converted to cordycepin by the oxidoreductase cns1. Pentostatin production is mediated by the ATP phosphoribosyltransferase activity of cns3 on adenosine to inhibit the activity of adenosine deaminase (ADA) to prevent COR deamination to 3'-deoxyinosine (3'-dI). This is Oxidoreductase cns1 from Cordyceps militaris (strain CM01) (Caterpillar fungus).